The sequence spans 161 residues: Protein YzcX (161 aa).

The chain is Protein YzcX (yzcX) from Escherichia coli (strain K12).